A 135-amino-acid polypeptide reads, in one-letter code: C-type lectin PAL (135 aa).

Intrachain disulfides connect C3–C14, C31–C131, C38–C133, and C106–C123. In terms of domain architecture, C-type lectin spans 10-132; it reads MNGLCYKIFD…CGSKNAFLCQ (123 aa). 5 residues coordinate Ca(2+): Q96, D98, E104, N119, and D120. A Galactose-binding motif is present at residues 96–98; the sequence is QPD.

It belongs to the true venom lectin family. In terms of assembly, homodimer; disulfide-linked. Expressed by the venom gland.

The protein localises to the secreted. In terms of biological role, galactose-binding lectin which recognizes specific carbohydrate structures and agglutinates a variety of animal cells by binding to cell-surface glycoproteins and glycolipids. This is a calcium-dependent lectin. Shows high hemagglutinating activity (MHC is 0.25 ug/ml on rabbit erythrocytes). The chain is C-type lectin PAL from Bitis arietans (African puff adder).